Reading from the N-terminus, the 202-residue chain is ATP-dependent Clp protease proteolytic subunit (202 aa).

Catalysis depends on Ser106, which acts as the Nucleophile. His131 is a catalytic residue.

Belongs to the peptidase S14 family. In terms of assembly, fourteen ClpP subunits assemble into 2 heptameric rings which stack back to back to give a disk-like structure with a central cavity, resembling the structure of eukaryotic proteasomes.

Its subcellular location is the cytoplasm. It catalyses the reaction Hydrolysis of proteins to small peptides in the presence of ATP and magnesium. alpha-casein is the usual test substrate. In the absence of ATP, only oligopeptides shorter than five residues are hydrolyzed (such as succinyl-Leu-Tyr-|-NHMec, and Leu-Tyr-Leu-|-Tyr-Trp, in which cleavage of the -Tyr-|-Leu- and -Tyr-|-Trp bonds also occurs).. In terms of biological role, cleaves peptides in various proteins in a process that requires ATP hydrolysis. Has a chymotrypsin-like activity. Plays a major role in the degradation of misfolded proteins. The polypeptide is ATP-dependent Clp protease proteolytic subunit (Acidovorax ebreus (strain TPSY) (Diaphorobacter sp. (strain TPSY))).